A 341-amino-acid polypeptide reads, in one-letter code: Phenylalanine--tRNA ligase alpha subunit (341 aa).

Glu-256 provides a ligand contact to Mg(2+).

It belongs to the class-II aminoacyl-tRNA synthetase family. Phe-tRNA synthetase alpha subunit type 1 subfamily. Tetramer of two alpha and two beta subunits. Mg(2+) is required as a cofactor.

It is found in the cytoplasm. It carries out the reaction tRNA(Phe) + L-phenylalanine + ATP = L-phenylalanyl-tRNA(Phe) + AMP + diphosphate + H(+). The chain is Phenylalanine--tRNA ligase alpha subunit from Leptospira biflexa serovar Patoc (strain Patoc 1 / Ames).